Consider the following 678-residue polypeptide: Amino-acid acetyltransferase, mitochondrial (678 aa).

The tract at residues 86 to 111 (LKAQHPPKAQTEPTTGHSKGTVTQSL) is disordered. Over residues 96-111 (TEPTTGHSKGTVTQSL) the composition is skewed to polar residues. The N-acetyltransferase domain occupies 499-668 (NRPRLSLDDP…YEQVCRSIQP (170 aa)).

This sequence belongs to the acetyltransferase family.

Its subcellular location is the mitochondrion. The enzyme catalyses L-glutamate + acetyl-CoA = N-acetyl-L-glutamate + CoA + H(+). The protein operates within amino-acid biosynthesis; L-arginine biosynthesis; N(2)-acetyl-L-ornithine from L-glutamate: step 1/4. N-acetylglutamate synthase involved in arginine biosynthesis. This is Amino-acid acetyltransferase, mitochondrial (arg2) from Aspergillus oryzae (strain ATCC 42149 / RIB 40) (Yellow koji mold).